A 609-amino-acid chain; its full sequence is Mitochondrial nucleoid-associated protein 1 (609 aa).

The Mitochondrial matrix segment spans residues 1 to 552 (MSDNPPRMEV…IRCNTTIRKS (552 aa)). Disordered stretches follow at residues 142-168 (ASEKTSPKRELAKDLPKSGESRCNPSE), 183-202 (SNQDRKYSSTLPNDVQTTSG), and 410-441 (QLSLEPKSDSQFQASHTGCQSPLCSAQRHTPQ). The span at 146–161 (TSPKRELAKDLPKSGE) shows a compositional bias: basic and acidic residues. Residues 418 to 441 (DSQFQASHTGCQSPLCSAQRHTPQ) show a composition bias toward polar residues. A helical membrane pass occupies residues 553–573 (GFGGITMLFTGYFVLCCSWSF). Residues 574 to 609 (RRLKKLCRPLPWKSTVPPCIGVAKTTGDCRSKTCLD) are Mitochondrial intermembrane-facing.

It localises to the mitochondrion inner membrane. It is found in the mitochondrion matrix. The protein resides in the mitochondrion nucleoid. Its function is as follows. Critical regulator of mitochondrial DNA (mtDNA) abundance. Binds dsDNA throughout the mitochondrial genome without sequence specificity and controls mtDNA copy number by promoting its replication. Also plays important roles in mitochondrial metabolism and cell proliferation. This chain is Mitochondrial nucleoid-associated protein 1, found in Homo sapiens (Human).